The chain runs to 487 residues: Betaine aldehyde dehydrogenase (487 aa).

K(+)-binding residues include isoleucine 27 and aspartate 93. Residue 149-151 participates in NAD(+) binding; that stretch reads GAW. Lysine 161 acts as the Charge relay system in catalysis. NAD(+) is bound by residues 175-178 and 228-231; these read KPSE and SVPT. Leucine 243 is a K(+) binding site. The active-site Proton acceptor is glutamate 249. NAD(+) is bound by residues glycine 251, cysteine 283, and glutamate 384. Residue cysteine 283 is the Nucleophile of the active site. Cysteine 283 is subject to Cysteine sulfenic acid (-SOH). Positions 454 and 457 each coordinate K(+). The active-site Charge relay system is glutamate 461.

Belongs to the aldehyde dehydrogenase family. Dimer of dimers. Requires K(+) as cofactor.

It carries out the reaction betaine aldehyde + NAD(+) + H2O = glycine betaine + NADH + 2 H(+). Its pathway is amine and polyamine biosynthesis; betaine biosynthesis via choline pathway; betaine from betaine aldehyde: step 1/1. Its function is as follows. Involved in the biosynthesis of the osmoprotectant glycine betaine. Catalyzes the irreversible oxidation of betaine aldehyde to the corresponding acid. The sequence is that of Betaine aldehyde dehydrogenase from Brucella anthropi (strain ATCC 49188 / DSM 6882 / CCUG 24695 / JCM 21032 / LMG 3331 / NBRC 15819 / NCTC 12168 / Alc 37) (Ochrobactrum anthropi).